The chain runs to 340 residues: Glyceraldehyde-3-phosphate dehydrogenase (340 aa).

NAD(+) contacts are provided by residues 11 to 12 (TI) and Gly109. 138–140 (SCN) contributes to the D-glyceraldehyde 3-phosphate binding site. Cys139 functions as the Nucleophile in the catalytic mechanism. Arg167 is an NAD(+) binding site. 193-194 (HA) serves as a coordination point for D-glyceraldehyde 3-phosphate. NAD(+) is bound at residue Gln300.

The protein belongs to the glyceraldehyde-3-phosphate dehydrogenase family. Homotetramer.

It is found in the cytoplasm. It catalyses the reaction D-glyceraldehyde 3-phosphate + phosphate + NADP(+) = (2R)-3-phospho-glyceroyl phosphate + NADPH + H(+). The enzyme catalyses D-glyceraldehyde 3-phosphate + phosphate + NAD(+) = (2R)-3-phospho-glyceroyl phosphate + NADH + H(+). It participates in carbohydrate degradation; glycolysis; pyruvate from D-glyceraldehyde 3-phosphate: step 1/5. This Saccharolobus islandicus (strain M.14.25 / Kamchatka #1) (Sulfolobus islandicus) protein is Glyceraldehyde-3-phosphate dehydrogenase.